The primary structure comprises 375 residues: Pulmonary surfactant-associated protein D (375 aa).

A signal peptide spans 1 to 21; the sequence is MLLFLLSALVLLTQSLGYLEA. S-nitrosocysteine is present on residues Cys-35 and Cys-40. The disordered stretch occupies residues 43–221; the sequence is VESGLPGRDG…DKGAKGESGL (179 aa). A Collagen-like domain is found at 46–222; sequence GLPGRDGRDG…KGAKGESGLP (177 aa). The segment covering 50-65 has biased composition (basic and acidic residues); it reads RDGRDGREGPRGEKGD. Pro-78 is modified (4-hydroxyproline). Position 87 is a 5-hydroxylysine (Lys-87). The N-linked (GlcNAc...) asparagine glycan is linked to Asn-90. Position 96 is a 4-hydroxyproline (Pro-96). A 5-hydroxylysine modification is found at Lys-99. Over residues 105-114 the composition is skewed to pro residues; the sequence is SGPPGPPGVP. Low complexity-rich tracts occupy residues 116–132 and 138–150; these read PAGREGPLGKQGNIGPQ and KGEAGPKGEVGAP. Residues Pro-171 and Pro-177 each carry the 4-hydroxyproline modification. Residues 173–189 are compositionally biased toward low complexity; the sequence is ERGAPGNAGAAGSAGVM. Residues 204-216 show a composition bias toward basic and acidic residues; the sequence is KGDKGVPGDKGAK. The stretch at 223–251 forms a coiled coil; that stretch reads DVASLRQQVEALQKQVQHLQAAFSQYKKV. In terms of domain architecture, C-type lectin spans 260–374; sequence VGEKIFKTAG…CGEKRLVVCE (115 aa). Disulfide bonds link Cys-281–Cys-373 and Cys-351–Cys-365.

This sequence belongs to the SFTPD family. In terms of assembly, oligomeric complex of 4 set of homotrimers. Post-translationally, hydroxylation on proline residues within the sequence motif, GXPG, is most likely to be 4-hydroxy as this fits the requirement for 4-hydroxylation in vertebrates. S-nitrosylation at Cys-35 and Cys-40 alters the quaternary structure which results in a pro-inflammatory chemoattractive signaling activity with macrophages.

The protein resides in the secreted. It is found in the extracellular space. It localises to the extracellular matrix. Its subcellular location is the surface film. In terms of biological role, contributes to the lung's defense against inhaled microorganisms, organic antigens and toxins. Interacts with compounds such as bacterial lipopolysaccharides, oligosaccharides and fatty acids and modulates leukocyte action in immune response. May participate in the extracellular reorganization or turnover of pulmonary surfactant. Binds strongly maltose residues and to a lesser extent other alpha-glucosyl moieties. The sequence is that of Pulmonary surfactant-associated protein D (SFTPD) from Macaca mulatta (Rhesus macaque).